The following is an 859-amino-acid chain: Protein EFR3 homolog (859 aa).

Residues 696–714 (RKNDGSGDQWQNDTPNFDS) are compositionally biased toward polar residues. Residues 696–728 (RKNDGSGDQWQNDTPNFDSTDGRESPSGYKTVG) are disordered.

The protein belongs to the EFR3 family.

The protein is Protein EFR3 homolog of Caenorhabditis elegans.